A 221-amino-acid chain; its full sequence is Histone H1C (221 aa).

Composition is skewed to low complexity over residues 1–11 (MTETAATETTP) and 27–44 (KKAAGGAKAKKPSGPSAS). 2 disordered regions span residues 1–44 (MTET…PSAS) and 123–221 (AKKK…AAKK). The H15 domain occupies 39 to 112 (SGPSASELIV…GASGSFKLNK (74 aa)). Composition is skewed to basic residues over residues 123–150 (AKKKLVAPKAKKPVAAKKKPKSPKKPKK) and 158–221 (SPKK…AAKK).

Belongs to the histone H1/H5 family.

It is found in the nucleus. The protein resides in the chromosome. Histones H1 are necessary for the condensation of nucleosome chains into higher-order structures. The sequence is that of Histone H1C from Xenopus laevis (African clawed frog).